The primary structure comprises 82 residues: Delta-actitoxin-Aeq2b 1 (82 aa).

The signal sequence occupies residues 1–19; sequence MNRLMILVFAAVILALASA. A propeptide spanning residues 20-26 is cleaved from the precursor; that stretch reads DEDVDIA. 3 disulfides stabilise this stretch: Cys32–Cys79, Cys34–Cys69, and Cys62–Cys80.

It belongs to the sea anemone sodium channel inhibitory toxin family. Type I subfamily.

It is found in the secreted. The protein localises to the nematocyst. Binds specifically to voltage-gated sodium channels (Nav), thereby delaying their inactivation during signal transduction. Causes death to crabs. This Actinia equina (Beadlet anemone) protein is Delta-actitoxin-Aeq2b 1.